A 245-amino-acid polypeptide reads, in one-letter code: MTSTASSSSRIVTDSPIVVALDYHNRENALAFVDKIDPRDCRLKVGKEMFTLFGPQFVRELQQRGFDIFLDLKFHDIPNTAAHAVAAAADLGVWMVNVHASGGARMMTAAREALLPFGKDAPLLIAVTVLTSMEASDLADLGVTVSPAQYAERLAGLTQKCGLDGVVCSAQEAVRFKQAFGEDFKLVTPGIRPQGSAAGDQRRIMTPEQALAAGVDYMVIGRPVTQSEDPAQTLKTINASLKGHG.

Residues Asp22, Lys44, Asp71–Thr80, Thr131, Arg192, Gln201, Gly221, and Arg222 each bind substrate. The active-site Proton donor is the Lys73.

This sequence belongs to the OMP decarboxylase family. Type 1 subfamily. Homodimer.

It carries out the reaction orotidine 5'-phosphate + H(+) = UMP + CO2. Its pathway is pyrimidine metabolism; UMP biosynthesis via de novo pathway; UMP from orotate: step 2/2. Functionally, catalyzes the decarboxylation of orotidine 5'-monophosphate (OMP) to uridine 5'-monophosphate (UMP). The protein is Orotidine 5'-phosphate decarboxylase of Escherichia fergusonii (strain ATCC 35469 / DSM 13698 / CCUG 18766 / IAM 14443 / JCM 21226 / LMG 7866 / NBRC 102419 / NCTC 12128 / CDC 0568-73).